The following is a 900-amino-acid chain: MNWTTDKVRQTWLDYFAKKDHLVLASKSLIPINDPSLLWINSGVATLKDYFSARKTPPSKRLVNAQICLRVNDIENVGFTSRHQTLFEMLGNFSIGDYFKTEAIDFAFDLLVNYYQLDPKRFYITVYEDDETTYKRWIKHKIDKNHIIKCDKSRNFWDLGLGPCGPCTEIYYDRGEKFDPKKIGEKLFFEDIENDRYVEIWNIVFSQFNNDGNGNYTELAQKNIDTGAGIERLVSVLQNSPTNFDTDIFLKLIKIIEAFCPFKYDPNSYFTFDPQKVKEQSYFRIIADHFKAITFTISEGVLPGPNERNYVVRRLLRRALIACKKLQLNLAFIEKIIDEIIASYENYYQHLKAKNETVKQVVLKEINAFNKTIDLGLVLFEKSVKNNTLTPQLTFQLNETYGFPVEIIRELVNQKGLTIDWTVFDQLMAKHRSISKQNNQTINFEKQNINLVNFKTKSTFFYHKNKINAKVIGLFDENYLPVKELNNQSGYVVFDQTVLYATSGGQRYDEGSCINHSNNNDQKISFQGVFKGPNKQHFHYFLVGSFKLNDQVTLSHDETWRKLAANNHSLEHLLHAALQKEIDPLIKQSGAFKSAQKATIDFNLNRHLTRNELEKVENKIRSLIKQKISSKEIFTDFEGSQKLNAIAYFEEEYSQHEILRVIRFGDYSVELCGGTHVANTASIEDCFITDFYSLGAGRWRIEIISSNETINNYLKAENQKLIQLKSELEKVLSLIDSSIFKVELKELQQRLDKFILPEKITQLRDASDTLLALKNDINQLKTKNYKVSQQALALSIKKQLLSLVDENKSYVIATFNDVEPKLLLQTLHDVFNQNQTKNFLIINQFNESNSFIVIGNKTTTIIEKLRNSFNLKGGGNDKLFRGSFQDNVTPQKLNELFQNK.

Zn(2+) contacts are provided by His-568, His-572, Cys-672, and His-676.

The protein belongs to the class-II aminoacyl-tRNA synthetase family. Zn(2+) serves as cofactor.

Its subcellular location is the cytoplasm. It catalyses the reaction tRNA(Ala) + L-alanine + ATP = L-alanyl-tRNA(Ala) + AMP + diphosphate. In terms of biological role, catalyzes the attachment of alanine to tRNA(Ala) in a two-step reaction: alanine is first activated by ATP to form Ala-AMP and then transferred to the acceptor end of tRNA(Ala). Also edits incorrectly charged Ser-tRNA(Ala) and Gly-tRNA(Ala) via its editing domain. The sequence is that of Alanine--tRNA ligase from Mycoplasma genitalium (strain ATCC 33530 / DSM 19775 / NCTC 10195 / G37) (Mycoplasmoides genitalium).